Here is a 228-residue protein sequence, read N- to C-terminus: Ribose-5-phosphate isomerase A (228 aa).

Residues 32–35 (TGST), 85–88 (DGAD), and 98–101 (KGGG) each bind substrate. The Proton acceptor role is filled by Glu107. Lys125 contacts substrate.

It belongs to the ribose 5-phosphate isomerase family. In terms of assembly, homodimer.

It catalyses the reaction aldehydo-D-ribose 5-phosphate = D-ribulose 5-phosphate. It functions in the pathway carbohydrate degradation; pentose phosphate pathway; D-ribose 5-phosphate from D-ribulose 5-phosphate (non-oxidative stage): step 1/1. Its function is as follows. Catalyzes the reversible conversion of ribose-5-phosphate to ribulose 5-phosphate. The sequence is that of Ribose-5-phosphate isomerase A from Ralstonia nicotianae (strain ATCC BAA-1114 / GMI1000) (Ralstonia solanacearum).